A 338-amino-acid polypeptide reads, in one-letter code: Anthranilate phosphoribosyltransferase (338 aa).

Residues G80, 83 to 84 (GD), T88, 90 to 93 (NIST), 108 to 116 (KHGNRSVSS), and S120 contribute to the 5-phospho-alpha-D-ribose 1-diphosphate site. G80 lines the anthranilate pocket. S92 serves as a coordination point for Mg(2+). Residue N111 coordinates anthranilate. R166 is a binding site for anthranilate. Residues D225 and E226 each contribute to the Mg(2+) site.

The protein belongs to the anthranilate phosphoribosyltransferase family. As to quaternary structure, homodimer. Requires Mg(2+) as cofactor.

The catalysed reaction is N-(5-phospho-beta-D-ribosyl)anthranilate + diphosphate = 5-phospho-alpha-D-ribose 1-diphosphate + anthranilate. The protein operates within amino-acid biosynthesis; L-tryptophan biosynthesis; L-tryptophan from chorismate: step 2/5. In terms of biological role, catalyzes the transfer of the phosphoribosyl group of 5-phosphorylribose-1-pyrophosphate (PRPP) to anthranilate to yield N-(5'-phosphoribosyl)-anthranilate (PRA). This Desulfatibacillum aliphaticivorans protein is Anthranilate phosphoribosyltransferase.